The primary structure comprises 61 residues: Small ribosomal subunit protein uS14 (61 aa).

C24, C27, C40, and C43 together coordinate Zn(2+).

This sequence belongs to the universal ribosomal protein uS14 family. Zinc-binding uS14 subfamily. As to quaternary structure, part of the 30S ribosomal subunit. Contacts proteins S3 and S10. Zn(2+) serves as cofactor.

Functionally, binds 16S rRNA, required for the assembly of 30S particles and may also be responsible for determining the conformation of the 16S rRNA at the A site. The protein is Small ribosomal subunit protein uS14 of Mycoplasmopsis pulmonis (strain UAB CTIP) (Mycoplasma pulmonis).